The chain runs to 117 residues: Transcription elongation factor SPT4 (117 aa).

A2 carries the N-acetylalanine modification. An interaction with SUPT5H region spans residues 2–40 (ALETVPKDLRHLRACLLCSLVKTIDQFEYDGCDNCDAYL). Zn(2+) contacts are provided by C16, C19, C33, and C36. The segment at 16–36 (CLLCSLVKTIDQFEYDGCDNC) adopts a C4-type zinc-finger fold.

This sequence belongs to the SPT4 family. As to quaternary structure, interacts with SUPT5H to form DSIF. DSIF interacts with the positive transcription elongation factor b complex (P-TEFb complex), which is composed of CDK9 and cyclin-T (CCNT1 or CCNT2). DSIF interacts with RNA polymerase II, and this interaction is reduced by phosphorylation of the C-terminal domain (CTD) of POLR2A by P-TEFb. DSIF also interacts with the NELF complex, which is composed of NELFA, NELFB, NELFD and NELFE, and this interaction occurs following prior binding of DSIF to RNA polymerase II. DSIF also interacts with PRMT1/HRMT1L2, TATSF1, RNGTT/CAP1A, PRMT5/SKB1, SUPT6H, and can interact with PIN1. In terms of processing, ubiquitinated by UBR5 when not assembled in the DSIF complex, leading to its degradation: UBR5 recognizes and binds a degron that is not accessible when SUPT4H1 is part of the DSIF complex.

The protein resides in the nucleus. In terms of biological role, component of the DRB sensitivity-inducing factor complex (DSIF complex), which regulates mRNA processing and transcription elongation by RNA polymerase II. DSIF positively regulates mRNA capping by stimulating the mRNA guanylyltransferase activity of RNGTT/CAP1A. DSIF also acts cooperatively with the negative elongation factor complex (NELF complex) to enhance transcriptional pausing at sites proximal to the promoter. Transcriptional pausing may facilitate the assembly of an elongation competent RNA polymerase II complex. DSIF and NELF promote pausing by inhibition of the transcription elongation factor TFIIS/S-II. TFIIS/S-II binds to RNA polymerase II at transcription pause sites and stimulates the weak intrinsic nuclease activity of the enzyme. Cleavage of blocked transcripts by RNA polymerase II promotes the resumption of transcription from the new 3' terminus and may allow repeated attempts at transcription through natural pause sites. The polypeptide is Transcription elongation factor SPT4 (SUPT4H1) (Pongo abelii (Sumatran orangutan)).